A 151-amino-acid polypeptide reads, in one-letter code: Endoribonuclease YbeY (151 aa).

The Zn(2+) site is built by His117, His121, and His127.

Belongs to the endoribonuclease YbeY family. Requires Zn(2+) as cofactor.

It is found in the cytoplasm. In terms of biological role, single strand-specific metallo-endoribonuclease involved in late-stage 70S ribosome quality control and in maturation of the 3' terminus of the 16S rRNA. The sequence is that of Endoribonuclease YbeY from Alkaliphilus oremlandii (strain OhILAs) (Clostridium oremlandii (strain OhILAs)).